Reading from the N-terminus, the 219-residue chain is Type-5 uracil-DNA glycosylase (219 aa).

Positions 13, 16, 115, and 130 each coordinate [4Fe-4S] cluster.

It belongs to the uracil-DNA glycosylase (UDG) superfamily. Type 5 (UDGb) family.

Its function is as follows. DNA glycosylase with broad substrate specificity. Can remove uracil from double-stranded DNA containing either a U/G, U/A, U/C or U/T base pair. Can also excise hypoxanthine from double-stranded DNA containing G/I, T/I, and A/I base pairs, xanthine from both double-stranded and single stranded DNA, thymine from G/T mismatched DNA, 5'-hydroxymethyluracil and 5'-fluorouracil. The polypeptide is Type-5 uracil-DNA glycosylase (Thermus thermophilus (strain ATCC 27634 / DSM 579 / HB8)).